Here is a 290-residue protein sequence, read N- to C-terminus: HTH-type transcriptional activator RhaR (290 aa).

Residues 179-277 (DLIMSALQQS…GMTPRDYRQR (99 aa)) enclose the HTH araC/xylS-type domain. 2 DNA-binding regions (H-T-H motif) span residues 196 to 217 (ADFCHKNQLVERSLKQLFRQQT) and 244 to 267 (ISDIAARCGFEDSNYFSAVFTREA).

In terms of assembly, binds DNA as a dimer.

It is found in the cytoplasm. Its function is as follows. Activates expression of the rhaSR operon in response to L-rhamnose. The chain is HTH-type transcriptional activator RhaR from Yersinia pseudotuberculosis serotype O:1b (strain IP 31758).